The primary structure comprises 124 residues: Hydrogenase maturation factor HypA (124 aa).

Ni(2+) is bound at residue His-2. Zn(2+) is bound by residues Cys-78, Cys-81, Cys-97, and Cys-100.

This sequence belongs to the HypA/HybF family.

Involved in the maturation of [NiFe] hydrogenases. Required for nickel insertion into the metal center of the hydrogenase. In Methanocaldococcus jannaschii (strain ATCC 43067 / DSM 2661 / JAL-1 / JCM 10045 / NBRC 100440) (Methanococcus jannaschii), this protein is Hydrogenase maturation factor HypA.